The following is a 152-amino-acid chain: UPF0178 protein YPTS_2857 (152 aa).

This sequence belongs to the UPF0178 family.

The sequence is that of UPF0178 protein YPTS_2857 from Yersinia pseudotuberculosis serotype IB (strain PB1/+).